Here is an 86-residue protein sequence, read N- to C-terminus: Large ribosomal subunit protein uL23 (86 aa).

It belongs to the universal ribosomal protein uL23 family. Part of the 50S ribosomal subunit. Contacts protein L29.

Functionally, binds to 23S rRNA. One of the proteins that surrounds the polypeptide exit tunnel on the outside of the ribosome. In Pyrococcus furiosus (strain ATCC 43587 / DSM 3638 / JCM 8422 / Vc1), this protein is Large ribosomal subunit protein uL23.